Here is a 75-residue protein sequence, read N- to C-terminus: UPF0154 protein MYPE400 (75 aa).

Residues Ile-5–Phe-27 traverse the membrane as a helical segment.

Belongs to the UPF0154 family.

It is found in the membrane. The protein is UPF0154 protein MYPE400 of Malacoplasma penetrans (strain HF-2) (Mycoplasma penetrans).